Consider the following 172-residue polypeptide: Lipoprotein signal peptidase (172 aa).

The next 4 helical transmembrane spans lie at 12 to 32 (TSAA…VILF), 43 to 63 (VFAY…LVYN), 77 to 97 (WQRW…CYLL), and 102 to 122 (GQKM…GNVI). Catalysis depends on residues D132 and D150. The helical transmembrane segment at 142 to 162 (HWPAFNLADSAITVGAVLLVL) threads the bilayer.

This sequence belongs to the peptidase A8 family.

It localises to the cell inner membrane. The enzyme catalyses Release of signal peptides from bacterial membrane prolipoproteins. Hydrolyzes -Xaa-Yaa-Zaa-|-(S,diacylglyceryl)Cys-, in which Xaa is hydrophobic (preferably Leu), and Yaa (Ala or Ser) and Zaa (Gly or Ala) have small, neutral side chains.. It participates in protein modification; lipoprotein biosynthesis (signal peptide cleavage). Functionally, this protein specifically catalyzes the removal of signal peptides from prolipoproteins. The protein is Lipoprotein signal peptidase of Paraburkholderia phytofirmans (strain DSM 17436 / LMG 22146 / PsJN) (Burkholderia phytofirmans).